The sequence spans 42 residues: Photosystem II reaction center protein J (42 aa).

Residues 10 to 30 (IPLWLVGTVVGLLAIGLLALF) traverse the membrane as a helical segment.

This sequence belongs to the PsbJ family. As to quaternary structure, PSII is composed of 1 copy each of membrane proteins PsbA, PsbB, PsbC, PsbD, PsbE, PsbF, PsbH, PsbI, PsbJ, PsbK, PsbL, PsbM, PsbT, PsbX, PsbY, PsbZ, Psb30/Ycf12, at least 3 peripheral proteins of the oxygen-evolving complex and a large number of cofactors. It forms dimeric complexes.

It is found in the plastid. Its subcellular location is the chloroplast thylakoid membrane. Its function is as follows. One of the components of the core complex of photosystem II (PSII). PSII is a light-driven water:plastoquinone oxidoreductase that uses light energy to abstract electrons from H(2)O, generating O(2) and a proton gradient subsequently used for ATP formation. It consists of a core antenna complex that captures photons, and an electron transfer chain that converts photonic excitation into a charge separation. This Mesostigma viride (Green alga) protein is Photosystem II reaction center protein J.